A 178-amino-acid polypeptide reads, in one-letter code: Inner membrane-spanning protein YciB (178 aa).

6 helical membrane passes run 1-21, 23-43, 51-71, 77-97, 120-140, and 150-170; these read MKILFDFLPIVIFFVVYKMTG, IIIATAILIPATIIQVGFTWF, MHLVSLALVVLLGGATVLLGD, WKPTIVNGLFAIAFLGSQFIG, LNLAWVGFFIVSGVTNLYVAF, and FKLFGLLGMTIVFIILQGIYL.

Belongs to the YciB family.

It localises to the cell inner membrane. Its function is as follows. Plays a role in cell envelope biogenesis, maintenance of cell envelope integrity and membrane homeostasis. This chain is Inner membrane-spanning protein YciB, found in Marinomonas sp. (strain MWYL1).